The sequence spans 439 residues: Glutamyl-tRNA reductase (439 aa).

Substrate is bound by residues 46 to 49 (TCNR), Ser-111, 116 to 118 (EGE), and Gln-122. Cys-47 serves as the catalytic Nucleophile. Residue 191 to 196 (GTGAYA) participates in NADP(+) binding.

This sequence belongs to the glutamyl-tRNA reductase family. In terms of assembly, homodimer.

The enzyme catalyses (S)-4-amino-5-oxopentanoate + tRNA(Glu) + NADP(+) = L-glutamyl-tRNA(Glu) + NADPH + H(+). It functions in the pathway porphyrin-containing compound metabolism; protoporphyrin-IX biosynthesis; 5-aminolevulinate from L-glutamyl-tRNA(Glu): step 1/2. Functionally, catalyzes the NADPH-dependent reduction of glutamyl-tRNA(Glu) to glutamate 1-semialdehyde (GSA). The sequence is that of Glutamyl-tRNA reductase from Clavibacter michiganensis subsp. michiganensis (strain NCPPB 382).